A 38-amino-acid polypeptide reads, in one-letter code: Cytochrome b6-f complex subunit 5 (38 aa).

Residues 5–25 (LVLGIVLGLIPITLAGLFVAA) traverse the membrane as a helical segment.

Belongs to the PetG family. As to quaternary structure, the 4 large subunits of the cytochrome b6-f complex are cytochrome b6, subunit IV (17 kDa polypeptide, PetD), cytochrome f and the Rieske protein, while the 4 small subunits are PetG, PetL, PetM and PetN. The complex functions as a dimer.

The protein resides in the cellular thylakoid membrane. Functionally, component of the cytochrome b6-f complex, which mediates electron transfer between photosystem II (PSII) and photosystem I (PSI), cyclic electron flow around PSI, and state transitions. PetG is required for either the stability or assembly of the cytochrome b6-f complex. The sequence is that of Cytochrome b6-f complex subunit 5 from Microcystis aeruginosa (strain NIES-843 / IAM M-2473).